Here is an 822-residue protein sequence, read N- to C-terminus: MNKEEYSDISDSESEEVHETNNHNEHEHEEEDDTPEIVVPERKFLKEDEDYSVPFPVMRECLVLLLQSRRILRDMMYYRFKMDRFLSGNLSVFEIQNLLHSQREDKESDWIAEIQELKRNLVSEVRRNHTLERDLNRLDKRIALLIKNRGNIQDVLADKAGLKAPKHKGDQKKPELINDPKKLEAYQNLFYLLQTEPKYLAGLVYLIQPEQMESFLGTVILTLFGDAFTPREEFLLLSLYRLSIQKEMANIATVGDFLKADTVVPKMIITYNKRKQGTDYLKAVIGPILSNVIKQELNLELKPNLVYAAIISEQEIRTGEKSTLDRNVSHEKALEVPEVTKTIKARVDQLISICEQFLDGIISSLNRLPYGIRWICKQIYQIAEKNFTKSTQDEILKVIGYFIYYRFIQVAMVSPEEYDLVGREIHPTARKNLINVSKVLQALFNFAQFGSSEKHFIPLNGWITSHMGDIKNYLQEIIEVGEPEDYLQVDKYMELTQKTKPVIIISLPEICNTHQLISKNLDSLVAKGEKDDPMRIIMKELDEFGPPPDIAADDDREVQLTLSNKFQKTIEEELSPGESLLSQTKEMVISLLRALPTLPEQKDQSDEPPNLVDVLNKARQADPSLEPEIKKILDNLKKLEEYNLTTSADNYSSFLKAVALEVVNRAEIREQQKKEKQRLTTSLNNLRKHQKYLNEQIAQYNQYLQDCRLKHYQNKSKKKKKGDGAKVGPFKFSFSELHKKGVIVDSEVPQITRKKIKFVISSDTVGVFDVSAKMAGIDVQTMRLELDDLLELNSIGTTTLELDQITLDVNMTIHLLNKLFLY.

The segment at 1–36 (MNKEEYSDISDSESEEVHETNNHNEHEHEEEDDTPE) is disordered. Over residues 15-27 (EEVHETNNHNEHE) the composition is skewed to basic and acidic residues. Residues 104-152 (EDKESDWIAEIQELKRNLVSEVRRNHTLERDLNRLDKRIALLIKNRGNI) are a coiled coil. A required for interaction to rac1A region spans residues 161–822 (GLKAPKHKGD…IHLLNKLFLY (662 aa)). Residues 234-477 (FLLLSLYRLS…GDIKNYLQEI (244 aa)) enclose the Ras-GAP domain.

As to quaternary structure, heterotetramer. Quaternary complex with activated rac1A, ctxA and ctxB. Interacts directly with rac1A and ctxA. Preferentially interacts with activated forms of rac1A, rac1B and rac1C. Interacts with racE.

The protein resides in the cytoplasm. The protein localises to the cell cortex. Its subcellular location is the cleavage furrow. Part of signaling pathway that is required for completion of cytokinesis. gapA and rgaA control cortexillin localization to the cleavage furrow and hence may be involved in cleavage of the midbody in the final stage of cytokinesis by regulating the actin cytoskeleton. Forms a complex by linking activated rac1A to ctxA. Assembly of this complex is necessary for the recruitment of cortexillin to the midzone of a dividing cell. Overexpression leads to the suppression of the formation of cellular projections containing F-actin and to a defect in cytokinesis. The protein is Ras GTPase-activating-like protein rgaA (rgaA) of Dictyostelium discoideum (Social amoeba).